Here is a 393-residue protein sequence, read N- to C-terminus: Arginine biosynthesis bifunctional protein ArgJ (393 aa).

The substrate site is built by threonine 143, lysine 168, threonine 179, glutamate 265, asparagine 388, and threonine 393. Threonine 179 functions as the Nucleophile in the catalytic mechanism.

This sequence belongs to the ArgJ family. Heterotetramer of two alpha and two beta chains.

The protein localises to the cytoplasm. The catalysed reaction is N(2)-acetyl-L-ornithine + L-glutamate = N-acetyl-L-glutamate + L-ornithine. The enzyme catalyses L-glutamate + acetyl-CoA = N-acetyl-L-glutamate + CoA + H(+). The protein operates within amino-acid biosynthesis; L-arginine biosynthesis; L-ornithine and N-acetyl-L-glutamate from L-glutamate and N(2)-acetyl-L-ornithine (cyclic): step 1/1. Its pathway is amino-acid biosynthesis; L-arginine biosynthesis; N(2)-acetyl-L-ornithine from L-glutamate: step 1/4. In terms of biological role, catalyzes two activities which are involved in the cyclic version of arginine biosynthesis: the synthesis of N-acetylglutamate from glutamate and acetyl-CoA as the acetyl donor, and of ornithine by transacetylation between N(2)-acetylornithine and glutamate. This is Arginine biosynthesis bifunctional protein ArgJ from Syntrophotalea carbinolica (strain DSM 2380 / NBRC 103641 / GraBd1) (Pelobacter carbinolicus).